Here is a 303-residue protein sequence, read N- to C-terminus: D-alanine--D-alanine ligase (303 aa).

The 196-residue stretch at 100 to 295 (KQLLRRHGIL…FPALIARLIE (196 aa)) folds into the ATP-grasp domain. 127–180 (GLGYPLFVKPNTGGSSLCLSRVTQPEGLAPALEAVFAHCGEAIVEPAIPGVEVT) lines the ATP pocket. 3 residues coordinate Mg(2+): Asp249, Glu262, and Asn264.

Belongs to the D-alanine--D-alanine ligase family. Mg(2+) is required as a cofactor. The cofactor is Mn(2+).

It is found in the cytoplasm. It carries out the reaction 2 D-alanine + ATP = D-alanyl-D-alanine + ADP + phosphate + H(+). It functions in the pathway cell wall biogenesis; peptidoglycan biosynthesis. Its function is as follows. Cell wall formation. In Nitratidesulfovibrio vulgaris (strain DP4) (Desulfovibrio vulgaris), this protein is D-alanine--D-alanine ligase.